We begin with the raw amino-acid sequence, 208 residues long: Uracil phosphoribosyltransferase (208 aa).

Residues Arg-78, Arg-103, and 130 to 138 (DPMLATGGS) each bind 5-phospho-alpha-D-ribose 1-diphosphate. Residues Ile-193 and 198–200 (GDA) contribute to the uracil site. Position 199 (Asp-199) interacts with 5-phospho-alpha-D-ribose 1-diphosphate.

It belongs to the UPRTase family. It depends on Mg(2+) as a cofactor.

It carries out the reaction UMP + diphosphate = 5-phospho-alpha-D-ribose 1-diphosphate + uracil. Its pathway is pyrimidine metabolism; UMP biosynthesis via salvage pathway; UMP from uracil: step 1/1. With respect to regulation, allosterically activated by GTP. Its function is as follows. Catalyzes the conversion of uracil and 5-phospho-alpha-D-ribose 1-diphosphate (PRPP) to UMP and diphosphate. The polypeptide is Uracil phosphoribosyltransferase (Pectobacterium atrosepticum (strain SCRI 1043 / ATCC BAA-672) (Erwinia carotovora subsp. atroseptica)).